We begin with the raw amino-acid sequence, 646 residues long: UvrABC system protein B (646 aa).

Residues 25–412 form the Helicase ATP-binding domain; it reads NGIKAGMREQ…QNIVEQIIRP (388 aa). ATP is bound at residue 38–45; the sequence is GVTGSGKT. A Beta-hairpin motif is present at residues 91–114; that stretch reads YYDFYQPEAYIPQTDTYIDKEASI. A Helicase C-terminal domain is found at 428-594; sequence QVDDLLSEIR…STRRTLREEE (167 aa). The UVR domain maps to 611–646; that stretch reads ELIIKDLEAEMRDAARNLEFERAARIRDRIMSLKSN.

Belongs to the UvrB family. As to quaternary structure, forms a heterotetramer with UvrA during the search for lesions. Interacts with UvrC in an incision complex.

It is found in the cytoplasm. Functionally, the UvrABC repair system catalyzes the recognition and processing of DNA lesions. A damage recognition complex composed of 2 UvrA and 2 UvrB subunits scans DNA for abnormalities. Upon binding of the UvrA(2)B(2) complex to a putative damaged site, the DNA wraps around one UvrB monomer. DNA wrap is dependent on ATP binding by UvrB and probably causes local melting of the DNA helix, facilitating insertion of UvrB beta-hairpin between the DNA strands. Then UvrB probes one DNA strand for the presence of a lesion. If a lesion is found the UvrA subunits dissociate and the UvrB-DNA preincision complex is formed. This complex is subsequently bound by UvrC and the second UvrB is released. If no lesion is found, the DNA wraps around the other UvrB subunit that will check the other stand for damage. This Methanothermobacter thermautotrophicus (strain ATCC 29096 / DSM 1053 / JCM 10044 / NBRC 100330 / Delta H) (Methanobacterium thermoautotrophicum) protein is UvrABC system protein B.